A 198-amino-acid polypeptide reads, in one-letter code: Glycerol-3-phosphate acyltransferase (198 aa).

5 helical membrane-spanning segments follow: residues 1–21 (MILI…IPAA), 52–72 (GPAL…VGLA), 81–101 (WTAL…FLGF), 115–135 (LALD…CIWL), and 153–173 (LAAA…LAAL).

It belongs to the PlsY family. Probably interacts with PlsX.

The protein resides in the cell membrane. The enzyme catalyses an acyl phosphate + sn-glycerol 3-phosphate = a 1-acyl-sn-glycero-3-phosphate + phosphate. The protein operates within lipid metabolism; phospholipid metabolism. In terms of biological role, catalyzes the transfer of an acyl group from acyl-phosphate (acyl-PO(4)) to glycerol-3-phosphate (G3P) to form lysophosphatidic acid (LPA). This enzyme utilizes acyl-phosphate as fatty acyl donor, but not acyl-CoA or acyl-ACP. The chain is Glycerol-3-phosphate acyltransferase from Deinococcus geothermalis (strain DSM 11300 / CIP 105573 / AG-3a).